The following is a 444-amino-acid chain: Citrate-proton symporter (444 aa).

The Cytoplasmic portion of the chain corresponds to 1 to 41; sequence MPTARCSMRASSTAPVRMMATAGGARIGAILRVTSGNFLEQ. Residues 42–62 traverse the membrane as a helical segment; sequence FDFFLFGFYATYIAHTFFPAS. Residues 63–72 are Periplasmic-facing; the sequence is SEFASLMMTF. A helical membrane pass occupies residues 73–93; the sequence is AVFGAGFLMRPIGAIVLGAYI. Residues 94–114 are Cytoplasmic-facing; it reads DKVGRRKGLIVTLSIMATGTF. The helical transmembrane segment at 115-135 threads the bilayer; it reads LIVLIPSYQTIGLWAPLLVLI. Over 136 to 137 the chain is Periplasmic; sequence GR. Residues 138–158 traverse the membrane as a helical segment; it reads LLQGFSAGAELGGVSVYLAEI. Residues 159–177 are Cytoplasmic-facing; sequence ATPGRKGFYTSWQSGSQQV. Residues 178–198 traverse the membrane as a helical segment; sequence AIMVAAAMGFALNAVLEPSAI. Position 199 (serine 199) is a topological domain, periplasmic. Residues 200–220 form a helical membrane-spanning segment; the sequence is DWGWRIPFLFGVLIVPFIFIL. Residues 221 to 251 are Cytoplasmic-facing; the sequence is RRKLEETQEFTARRHHLAMRQVFATLLANWQ. A helical transmembrane segment spans residues 252-272; that stretch reads VVIAGMMMVAMTTTAFYLITV. Topologically, residues 273 to 289 are periplasmic; the sequence is YAPTFGKKVLMLSASDS. The helical transmembrane segment at 290 to 310 threads the bilayer; the sequence is LLVTLLVAISNFFWLPVGGAL. Topologically, residues 311–318 are cytoplasmic; the sequence is SDRFGRRS. The helical transmembrane segment at 319–339 threads the bilayer; it reads VLIAMTLLALATAWPALTMLA. Residue asparagine 340 is a topological domain, periplasmic. The helical transmembrane segment at 341 to 361 threads the bilayer; that stretch reads APSFLMMLSVLLWLSFIYGMY. Topologically, residues 362–379 are cytoplasmic; it reads NGAMIPALTEIMPAEVRV. A helical membrane pass occupies residues 380–400; it reads AGFSLAYSLATAVFGGFTPVI. Residues 401–411 lie on the Periplasmic side of the membrane; it reads STALIEYTGDK. The helical transmembrane segment at 412 to 432 threads the bilayer; that stretch reads ASPGYWMSFAAICGLLATCYL. At 433 to 444 the chain is on the cytoplasmic side; it reads YRRSAVALQTAR.

It belongs to the major facilitator superfamily. Metabolite:H+ Symporter (MHS) family (TC 2.A.1.6) family.

Its subcellular location is the cell inner membrane. Uptake of citrate across the boundary membrane with the concomitant transport of protons into the cell (symport system). The polypeptide is Citrate-proton symporter (citH) (Klebsiella pneumoniae).